We begin with the raw amino-acid sequence, 421 residues long: Testin (421 aa).

A PET domain is found at Met92–Asp199. Residues Glu133 to Cys164 form a disordered region. Over residues Pro155–Cys164 the composition is skewed to basic and acidic residues. LIM zinc-binding domains lie at Tyr234–Glu297, Pro299–Val359, and Gln362–Ser421.

The protein belongs to the prickle / espinas / testin family. Interacts via LIM domain 1 with ZYX. Interacts (via LIM domain 3) with ENAH and VASP. Interacts with ALKBH4, talin, actin, alpha-actinin, GRIP1 and PXN. Interacts (via LIM domain 2) with ACTL7A (via N-terminus). Heterodimer with ACTL7A; the heterodimer interacts with ENAH to form a heterotrimer.

It is found in the cytoplasm. Its subcellular location is the cell junction. The protein resides in the focal adhesion. Scaffold protein that may play a role in cell adhesion, cell spreading and in the reorganization of the actin cytoskeleton. Plays a role in the regulation of cell proliferation. May act as a tumor suppressor. The sequence is that of Testin (TES) from Plecturocebus moloch (Dusky titi monkey).